The chain runs to 485 residues: tRNA-2-methylthio-N(6)-dimethylallyladenosine synthase (485 aa).

One can recognise an MTTase N-terminal domain in the interval 37 to 154 (GKLYIKTHGC…LPELIRARRE (118 aa)). 6 residues coordinate [4Fe-4S] cluster: Cys46, Cys83, Cys117, Cys191, Cys195, and Cys198. One can recognise a Radical SAM core domain in the interval 177–416 (RADGPSAFVS…HINAHAAGIS (240 aa)). One can recognise a TRAM domain in the interval 417–480 (QRMVGSVQRV…SNSLRGRIQL (64 aa)).

It belongs to the methylthiotransferase family. MiaB subfamily. As to quaternary structure, monomer. [4Fe-4S] cluster is required as a cofactor.

It localises to the cytoplasm. The catalysed reaction is N(6)-dimethylallyladenosine(37) in tRNA + (sulfur carrier)-SH + AH2 + 2 S-adenosyl-L-methionine = 2-methylsulfanyl-N(6)-dimethylallyladenosine(37) in tRNA + (sulfur carrier)-H + 5'-deoxyadenosine + L-methionine + A + S-adenosyl-L-homocysteine + 2 H(+). Its function is as follows. Catalyzes the methylthiolation of N6-(dimethylallyl)adenosine (i(6)A), leading to the formation of 2-methylthio-N6-(dimethylallyl)adenosine (ms(2)i(6)A) at position 37 in tRNAs that read codons beginning with uridine. The sequence is that of tRNA-2-methylthio-N(6)-dimethylallyladenosine synthase from Xanthomonas campestris pv. campestris (strain 8004).